A 168-amino-acid chain; its full sequence is 2-C-methyl-D-erythritol 2,4-cyclodiphosphate synthase (168 aa).

Residues D11 and H13 each coordinate a divalent metal cation. 4-CDP-2-C-methyl-D-erythritol 2-phosphate is bound by residues 11–13 and 38–39; these read DVH and HS. H46 provides a ligand contact to a divalent metal cation. 4-CDP-2-C-methyl-D-erythritol 2-phosphate-binding positions include 60 to 62, 133 to 136, F140, and R143; these read DIG and TTTD.

Belongs to the IspF family. As to quaternary structure, homotrimer. A divalent metal cation is required as a cofactor.

It carries out the reaction 4-CDP-2-C-methyl-D-erythritol 2-phosphate = 2-C-methyl-D-erythritol 2,4-cyclic diphosphate + CMP. It participates in isoprenoid biosynthesis; isopentenyl diphosphate biosynthesis via DXP pathway; isopentenyl diphosphate from 1-deoxy-D-xylulose 5-phosphate: step 4/6. Its function is as follows. Involved in the biosynthesis of isopentenyl diphosphate (IPP) and dimethylallyl diphosphate (DMAPP), two major building blocks of isoprenoid compounds. Catalyzes the conversion of 4-diphosphocytidyl-2-C-methyl-D-erythritol 2-phosphate (CDP-ME2P) to 2-C-methyl-D-erythritol 2,4-cyclodiphosphate (ME-CPP) with a corresponding release of cytidine 5-monophosphate (CMP). This is 2-C-methyl-D-erythritol 2,4-cyclodiphosphate synthase from Cutibacterium acnes (strain DSM 16379 / KPA171202) (Propionibacterium acnes).